The chain runs to 118 residues: UPF0102 protein Francci3_3586 (118 aa).

Belongs to the UPF0102 family.

This chain is UPF0102 protein Francci3_3586, found in Frankia casuarinae (strain DSM 45818 / CECT 9043 / HFP020203 / CcI3).